Reading from the N-terminus, the 189-residue chain is Small heat shock protein 21 (189 aa).

The segment at P26–G53 is disordered. The sHSP domain maps to K77–S183.

The protein belongs to the small heat shock protein (HSP20) family.

Its function is as follows. Heat shock protein required for pathogenicity. Mediates thermotolerance and adaptation to oxidative stress and ethanol-induced stress. Required for invasive growth and filament formation under various filament inducing conditions. Plays a role in the capacity of damaging human-derived endothelial and oral epithelial cells during infection. Potentiates resistance to antifungal drugs, as well as resistance to killing by human neutrophils. Plays a major role in trehalose homeostasis in response to elevated temperatures. Regulates CEK1 activation by phosphorylation in response to elevated temperatures. The protein is Small heat shock protein 21 (HSP21) of Candida albicans (strain SC5314 / ATCC MYA-2876) (Yeast).